The sequence spans 249 residues: Probable transcriptional regulatory protein Tfu_2096 (249 aa).

Belongs to the TACO1 family.

It localises to the cytoplasm. The chain is Probable transcriptional regulatory protein Tfu_2096 from Thermobifida fusca (strain YX).